A 188-amino-acid chain; its full sequence is GMP synthase [glutamine-hydrolyzing] subunit A (188 aa).

Residues 1-188 (MIVILDNGGQ…FCKVCGYKFE (188 aa)) enclose the Glutamine amidotransferase type-1 domain. The active-site Nucleophile is the cysteine 76. Active-site residues include histidine 163 and glutamate 165.

In terms of assembly, heterodimer composed of a glutamine amidotransferase subunit (A) and a GMP-binding subunit (B).

It catalyses the reaction XMP + L-glutamine + ATP + H2O = GMP + L-glutamate + AMP + diphosphate + 2 H(+). It participates in purine metabolism; GMP biosynthesis; GMP from XMP (L-Gln route): step 1/1. In terms of biological role, catalyzes the synthesis of GMP from XMP. This Methanocaldococcus jannaschii (strain ATCC 43067 / DSM 2661 / JAL-1 / JCM 10045 / NBRC 100440) (Methanococcus jannaschii) protein is GMP synthase [glutamine-hydrolyzing] subunit A.